Consider the following 348-residue polypeptide: Zinc transporter ZIP13 (348 aa).

Residues 1 to 45 (MMIQTAVAQAKTAPAGPGPWSIKDLVDLQYLDELMSIDNLDVWFC) lie on the Cytoplasmic side of the membrane. The chain crosses the membrane as a helical span at residues 46 to 66 (SLVGSIAIGLSGIFPLLVIPI). Residues 67–83 (EAGTALKTEAGCQKLKK) are Lumenal-facing. A helical membrane pass occupies residues 84 to 104 (LLSFAIGGLLGDVFLHLLPEA). The Cytoplasmic portion of the chain corresponds to 105–118 (WAYTSSPGGSHRHY). A helical membrane pass occupies residues 119 to 139 (CTQGLWVIGGLMSFLTLEKMF). Over 140-219 (PDEVGDPETK…CIDNFTHGLA (80 aa)) the chain is Lumenal. The tract at residues 144 to 192 (GDPETKTSFQRTTSSSSDLSSQFSVSPQTNGICSNNNSDSKPKTDISPY) is disordered. Positions 149–169 (KTSFQRTTSSSSDLSSQFSVS) are enriched in low complexity. A compositionally biased stretch (polar residues) spans 170–182 (PQTNGICSNNNSD). A helical membrane pass occupies residues 220–240 (VAGSFLVSRKVGFLTTFAILL). The XEXPHE-motif signature appears at 241–246 (HEIPHE). The Cytoplasmic portion of the chain corresponds to 241–262 (HEIPHEVGDFAILLRAGFDRWK). The chain crosses the membrane as a helical span at residues 263–283 (AARMQLSTALGGVLGACFALC). The Lumenal segment spans residues 284–294 (SQSQHGAENAT). Residues 295–315 (TWILPFTSGGFLYIALVNVVP) form a helical membrane-spanning segment. The Cytoplasmic segment spans residues 316–326 (DLLEETNPRNS). The chain crosses the membrane as a helical span at residues 327 to 347 (LLQVLLLFSGIGVMALLSIAM). Asp-348 is a topological domain (lumenal).

The protein belongs to the ZIP transporter (TC 2.A.5) family. As to quaternary structure, homodimer.

The protein localises to the golgi apparatus membrane. The protein resides in the cytoplasmic vesicle membrane. It is found in the endoplasmic reticulum membrane. It catalyses the reaction Zn(2+)(in) = Zn(2+)(out). Functionally, functions as a zinc transporter transporting Zn(2+) from the Golgi apparatus to the cytosol and thus influences the zinc level at least in areas of the cytosol. This chain is Zinc transporter ZIP13, found in Danio rerio (Zebrafish).